Consider the following 172-residue polypeptide: Capsid protein (172 aa).

The disordered stretch occupies residues M1–S26. The span at K11–Y20 shows a compositional bias: basic residues.

Belongs to the nanoviridae capsid protein family.

The protein localises to the virion. The sequence is that of Capsid protein (DNA-S) from Faba bean necrotic yellows virus (isolate Egyptian EV1-93) (FBNYV).